The chain runs to 230 residues: uncharacterized protein (230 aa).

Residue 10–34 participates in NADP(+) binding; sequence VVTGASSGIGEAIAKKLSQQGASIV. Ser-139 lines the substrate pocket. Tyr-152 acts as the Proton acceptor in catalysis.

This sequence belongs to the short-chain dehydrogenases/reductases (SDR) family.

This is an uncharacterized protein from Staphylococcus epidermidis (strain ATCC 12228 / FDA PCI 1200).